The chain runs to 369 residues: UDP-N-acetylenolpyruvoylglucosamine reductase (369 aa).

The FAD-binding PCMH-type domain occupies 29-202; it reads VGPIARRVIT…LEVEFALDPS (174 aa). The active site involves Arg176. The active-site Proton donor is the Ser257. The active site involves Glu361.

The protein belongs to the MurB family. FAD serves as cofactor.

The protein localises to the cytoplasm. The catalysed reaction is UDP-N-acetyl-alpha-D-muramate + NADP(+) = UDP-N-acetyl-3-O-(1-carboxyvinyl)-alpha-D-glucosamine + NADPH + H(+). The protein operates within cell wall biogenesis; peptidoglycan biosynthesis. Its function is as follows. Cell wall formation. The protein is UDP-N-acetylenolpyruvoylglucosamine reductase of Mycobacterium tuberculosis (strain ATCC 25177 / H37Ra).